We begin with the raw amino-acid sequence, 193 residues long: Holliday junction branch migration complex subunit RuvA (193 aa).

The tract at residues 1–63 (MIHHLKGQLI…EDSHTLYGFA (63 aa)) is domain I. A domain II region spans residues 64–142 (EKSEREIFRL…KVLGDDEVFV (79 aa)). Residues 143-145 (SQS) are flexible linker. The domain III stretch occupies residues 145 to 193 (SNTNKEEALSALEILGYNRRQAGKVVEKILKEDPESTVESIIKMALKKL).

This sequence belongs to the RuvA family. Homotetramer. Forms an RuvA(8)-RuvB(12)-Holliday junction (HJ) complex. HJ DNA is sandwiched between 2 RuvA tetramers; dsDNA enters through RuvA and exits via RuvB. An RuvB hexamer assembles on each DNA strand where it exits the tetramer. Each RuvB hexamer is contacted by two RuvA subunits (via domain III) on 2 adjacent RuvB subunits; this complex drives branch migration. In the full resolvosome a probable DNA-RuvA(4)-RuvB(12)-RuvC(2) complex forms which resolves the HJ.

It localises to the cytoplasm. Functionally, the RuvA-RuvB-RuvC complex processes Holliday junction (HJ) DNA during genetic recombination and DNA repair, while the RuvA-RuvB complex plays an important role in the rescue of blocked DNA replication forks via replication fork reversal (RFR). RuvA specifically binds to HJ cruciform DNA, conferring on it an open structure. The RuvB hexamer acts as an ATP-dependent pump, pulling dsDNA into and through the RuvAB complex. HJ branch migration allows RuvC to scan DNA until it finds its consensus sequence, where it cleaves and resolves the cruciform DNA. This chain is Holliday junction branch migration complex subunit RuvA, found in Christiangramia forsetii (strain DSM 17595 / CGMCC 1.15422 / KT0803) (Gramella forsetii).